We begin with the raw amino-acid sequence, 124 residues long: Large ribosomal subunit protein uL18 (124 aa).

This sequence belongs to the universal ribosomal protein uL18 family. As to quaternary structure, part of the 50S ribosomal subunit; part of the 5S rRNA/L5/L18/L25 subcomplex. Contacts the 5S and 23S rRNAs.

Functionally, this is one of the proteins that bind and probably mediate the attachment of the 5S RNA into the large ribosomal subunit, where it forms part of the central protuberance. In Parafrankia sp. (strain EAN1pec), this protein is Large ribosomal subunit protein uL18.